Consider the following 265-residue polypeptide: Putative 2-aminoethylphosphonate transport system permease protein PhnV (265 aa).

6 helical membrane passes run 13–33 (GVVA…VILM), 69–89 (LTIG…AALA), 104–124 (VFYL…LVAF), 131–151 (MNGT…AFTF), 185–205 (LPLL…LSMG), and 233–253 (NIAD…LLMM). The ABC transmembrane type-1 domain occupies 65 to 253 (LLASLTIGFC…LVAITLLLMM (189 aa)).

It belongs to the binding-protein-dependent transport system permease family.

It is found in the cell inner membrane. In terms of biological role, probably part of the PhnSTUV complex (TC 3.A.1.11.5) involved in 2-aminoethylphosphonate import. Probably responsible for the translocation of the substrate across the membrane. The polypeptide is Putative 2-aminoethylphosphonate transport system permease protein PhnV (phnV) (Salmonella typhimurium (strain LT2 / SGSC1412 / ATCC 700720)).